A 208-amino-acid chain; its full sequence is Guanylate kinase (208 aa).

A Guanylate kinase-like domain is found at 3–181 (GSLFIITAAS…ALTELKAIIV (179 aa)). Position 10 to 17 (10 to 17 (AASGTGKT)) interacts with ATP.

The protein belongs to the guanylate kinase family.

It localises to the cytoplasm. It carries out the reaction GMP + ATP = GDP + ADP. In terms of biological role, essential for recycling GMP and indirectly, cGMP. This chain is Guanylate kinase, found in Psychrobacter arcticus (strain DSM 17307 / VKM B-2377 / 273-4).